A 442-amino-acid polypeptide reads, in one-letter code: MAAPSSRPESNPPLYKQALDFALDVANGRHALSKLIPPALFLVDALLCGLIIWKVPYTEIDWAAYMEQVSQILSGERDYTKVRGGTGPLVYPAAHVYIYTGLYHLTDEGRNILLAQQLFAGLYMVTLAVVMGCYWQAKAPPYLFPLLTLSKRLHSIFVLRCFNDCFAVLFLWLAIFFFQRRNWQAGALLYTLGLGVKMTLLLSLPAVGIVLFLGSGSFVTTLQLVATMGLVQILIGVPFLAHYPTEYLSRAFELSRQFFFKWTVNWRFVGEEIFLSKGFALTLLALHVLVLGIFITTRWIKPARKSLVQLISPVLLAGKPPLTVPEHRAAARDVTPRYIMTTILSANAVGLLFARSLHYQFYAYVAWSTPFLLWRAGLHPVLVYLLWAVHEWAWNVFPSTPASSAVVVGVLGVTVAGVWFGAREEWEPGMKSSSKKEEAAMR.

Topologically, residues 1–34 are lumenal; the sequence is MAAPSSRPESNPPLYKQALDFALDVANGRHALSK. The helical transmembrane segment at 35 to 55 threads the bilayer; the sequence is LIPPALFLVDALLCGLIIWKV. Residues 56-84 are Cytoplasmic-facing; it reads PYTEIDWAAYMEQVSQILSGERDYTKVRG. The helical transmembrane segment at 85–105 threads the bilayer; that stretch reads GTGPLVYPAAHVYIYTGLYHL. Residues 106-111 lie on the Lumenal side of the membrane; the sequence is TDEGRN. Residues 112–132 traverse the membrane as a helical segment; the sequence is ILLAQQLFAGLYMVTLAVVMG. Residues 133-155 are Cytoplasmic-facing; that stretch reads CYWQAKAPPYLFPLLTLSKRLHS. The helical transmembrane segment at 156–176 threads the bilayer; sequence IFVLRCFNDCFAVLFLWLAIF. The Lumenal portion of the chain corresponds to 177 to 198; that stretch reads FFQRRNWQAGALLYTLGLGVKM. A helical membrane pass occupies residues 199–219; the sequence is TLLLSLPAVGIVLFLGSGSFV. Position 220 (T220) is a topological domain, cytoplasmic. A helical transmembrane segment spans residues 221–241; that stretch reads TLQLVATMGLVQILIGVPFLA. At 242-272 the chain is on the lumenal side; the sequence is HYPTEYLSRAFELSRQFFFKWTVNWRFVGEE. The helical transmembrane segment at 273 to 293 threads the bilayer; that stretch reads IFLSKGFALTLLALHVLVLGI. The Cytoplasmic portion of the chain corresponds to 294-333; sequence FITTRWIKPARKSLVQLISPVLLAGKPPLTVPEHRAAARD. Residues 334 to 354 form a helical membrane-spanning segment; it reads VTPRYIMTTILSANAVGLLFA. The Lumenal portion of the chain corresponds to 355 to 376; the sequence is RSLHYQFYAYVAWSTPFLLWRA. The chain crosses the membrane as a helical span at residues 377–397; the sequence is GLHPVLVYLLWAVHEWAWNVF. Residues 398-401 lie on the Cytoplasmic side of the membrane; that stretch reads PSTP. A helical transmembrane segment spans residues 402-422; it reads ASSAVVVGVLGVTVAGVWFGA. The Lumenal portion of the chain corresponds to 423–442; it reads REEWEPGMKSSSKKEEAAMR.

This sequence belongs to the glycosyltransferase ALG3 family.

The protein localises to the endoplasmic reticulum membrane. It carries out the reaction an alpha-D-Man-(1-&gt;2)-alpha-D-Man-(1-&gt;2)-alpha-D-Man-(1-&gt;3)-[alpha-D-Man-(1-&gt;6)]-beta-D-Man-(1-&gt;4)-beta-D-GlcNAc-(1-&gt;4)-alpha-D-GlcNAc-diphospho-di-trans,poly-cis-dolichol + a di-trans,poly-cis-dolichyl beta-D-mannosyl phosphate = an alpha-D-Man-(1-&gt;2)-alpha-D-Man-(1-&gt;2)-alpha-D-Man-(1-&gt;3)-[alpha-D-Man-(1-&gt;3)-alpha-D-Man-(1-&gt;6)]-beta-D-Man-(1-&gt;4)-beta-D-GlcNAc-(1-&gt;4)-alpha-D-GlcNAc-diphospho-di-trans,poly-cis-dolichol + a di-trans,poly-cis-dolichyl phosphate + H(+). It functions in the pathway protein modification; protein glycosylation. In terms of biological role, dol-P-Man:Man(5)GlcNAc(2)-PP-Dol alpha-1,3-mannosyltransferase that operates in the biosynthetic pathway of dolichol-linked oligosaccharides, the glycan precursors employed in protein asparagine (N)-glycosylation. The assembly of dolichol-linked oligosaccharides begins on the cytosolic side of the endoplasmic reticulum membrane and finishes in its lumen. The sequential addition of sugars to dolichol pyrophosphate produces dolichol-linked oligosaccharides containing fourteen sugars, including two GlcNAcs, nine mannoses and three glucoses. Once assembled, the oligosaccharide is transferred from the lipid to nascent proteins by oligosaccharyltransferases. In the lumen of the endoplasmic reticulum, adds the first dolichyl beta-D-mannosyl phosphate derived mannose in an alpha-1,3 linkage to Man(5)GlcNAc(2)-PP-dolichol to produce Man(6)GlcNAc(2)-PP-dolichol. This is Dol-P-Man:Man(5)GlcNAc(2)-PP-Dol alpha-1,3-mannosyltransferase (alg-3) from Neurospora crassa (strain ATCC 24698 / 74-OR23-1A / CBS 708.71 / DSM 1257 / FGSC 987).